A 451-amino-acid chain; its full sequence is tRNA-2-methylthio-N(6)-dimethylallyladenosine synthase (451 aa).

An MTTase N-terminal domain is found at 3 to 120 (LKLHIKTYGC…LPEMINHVRI (118 aa)). Residues C12, C49, C83, C157, C161, and C164 each contribute to the [4Fe-4S] cluster site. One can recognise a Radical SAM core domain in the interval 143–375 (QAKGPTAFVS…QECIRKQAMK (233 aa)). The region spanning 378–441 (QAMKGTVQCI…SNSLRGELIS (64 aa)) is the TRAM domain.

This sequence belongs to the methylthiotransferase family. MiaB subfamily. As to quaternary structure, monomer. Requires [4Fe-4S] cluster as cofactor.

It is found in the cytoplasm. The catalysed reaction is N(6)-dimethylallyladenosine(37) in tRNA + (sulfur carrier)-SH + AH2 + 2 S-adenosyl-L-methionine = 2-methylsulfanyl-N(6)-dimethylallyladenosine(37) in tRNA + (sulfur carrier)-H + 5'-deoxyadenosine + L-methionine + A + S-adenosyl-L-homocysteine + 2 H(+). Its function is as follows. Catalyzes the methylthiolation of N6-(dimethylallyl)adenosine (i(6)A), leading to the formation of 2-methylthio-N6-(dimethylallyl)adenosine (ms(2)i(6)A) at position 37 in tRNAs that read codons beginning with uridine. This is tRNA-2-methylthio-N(6)-dimethylallyladenosine synthase from Baumannia cicadellinicola subsp. Homalodisca coagulata.